A 340-amino-acid polypeptide reads, in one-letter code: HPr kinase/phosphorylase (340 aa).

Active-site residues include His153 and Lys174. An ATP-binding site is contributed by 168-175 (GRSGIGKS). Ser175 is a binding site for Mg(2+). The active-site Proton acceptor; for phosphorylation activity. Proton donor; for dephosphorylation activity is the Asp192. An important for the catalytic mechanism of both phosphorylation and dephosphorylation region spans residues 216-225 (MEIRGLGIID). Position 217 (Glu217) interacts with Mg(2+). The active site involves Arg258. An important for the catalytic mechanism of dephosphorylation region spans residues 279–284 (PIYPGK).

Belongs to the HPrK/P family. In terms of assembly, homohexamer. Mg(2+) is required as a cofactor.

The enzyme catalyses [HPr protein]-L-serine + ATP = [HPr protein]-O-phospho-L-serine + ADP + H(+). It carries out the reaction [HPr protein]-O-phospho-L-serine + phosphate + H(+) = [HPr protein]-L-serine + diphosphate. Catalyzes the ATP- as well as the pyrophosphate-dependent phosphorylation of a specific serine residue in HPr, a phosphocarrier protein of the phosphoenolpyruvate-dependent sugar phosphotransferase system (PTS). HprK/P also catalyzes the pyrophosphate-producing, inorganic phosphate-dependent dephosphorylation (phosphorolysis) of seryl-phosphorylated HPr (P-Ser-HPr). The chain is HPr kinase/phosphorylase from Chloroherpeton thalassium (strain ATCC 35110 / GB-78).